The primary structure comprises 1055 residues: MDS1 and EVI1 complex locus protein EVI1-A (1055 aa).

C2H2-type zinc fingers lie at residues 21-48 (YRCE…VTPH), 75-97 (HECK…LLSH), and 103-125 (YKCD…QMSH). The C2H2-type 4; degenerate zinc-finger motif lies at 131–155 (YECENCSKQVFTDPSNLQRHIRSQH). C2H2-type zinc fingers lie at residues 161 to 183 (HACS…KHIH) and 189 to 211 (FVCE…KRMH). The C2H2-type 7; atypical zinc-finger motif lies at 218 to 240 (IKCKDCGQMFSTTSSLNKHRRFC). 3 disordered regions span residues 324–345 (PVKG…VNQP), 372–423 (FITE…SDKD), and 531–621 (VPLK…PELP). Residues 332–345 (EQSSKSQSPHVNQP) are compositionally biased toward polar residues. A compositionally biased stretch (basic and acidic residues) spans 381-392 (RPHEKISDHSES). Residues 399–413 (STPSGSDLETTSGSD) are compositionally biased toward polar residues. The Nuclear localization signal signature appears at 422–435 (KDKLKENGKLYKDK). The segment covering 531–566 (VPLKIEPESPKETKKVQKGKTESPFDLTTKRKEEKA) has biased composition (basic and acidic residues). The CTBP-binding motif 1 signature appears at 554-558 (PFDLT). The span at 569-583 (NVPSKSGAPTSSNHD) shows a compositional bias: polar residues. The CTBP-binding motif 2 signature appears at 585 to 589 (PLDLS). A compositionally biased stretch (polar residues) spans 591 to 601 (GSRSRAATTKQ). Basic and acidic residues predominate over residues 602–621 (TEPRKNHIFNEKKDMDPELP). 3 consecutive C2H2-type zinc fingers follow at residues 734-756 (YTCR…LRTH), 762-785 (YRCK…RNIH), and 791-813 (FKCH…LKKH). Disordered stretches follow at residues 813-837 (HENG…GPIL) and 922-957 (SVDE…EDFK). Residues 816–827 (GNLSGTAASSPH) are compositionally biased toward polar residues. Positions 944–954 (DDEDDDDDEEE) are enriched in acidic residues.

In terms of assembly, homooligomer. Interacts with ctbp. In terms of tissue distribution, expressed dynamically during embryonic development; in the developing pronephros, specific areas of the brain (forebrain, midbrain and hindbrain), and in the majority of the visceral arch, and head mesenchyme derived from neural crest cells. Within the pronephros, expressed in the ventroposterior region of the pronephros anlagen from stage 20 (and is absent from the splanchnic layer that forms the glomus), then expression becomes restricted to the distal tubule and duct by the tadpole stage. In adults, expressed in various tissues including kidney, lung, testis, spleen and stomach.

It localises to the nucleus. The protein localises to the nucleus speckle. Functionally, transcriptional repressor during pronephros development. Plays a role in regionalization of the pronephros; may promote formation of the distal tubule and duct over formation of the glomus and proximal tubule. This is MDS1 and EVI1 complex locus protein EVI1-A (mecom-a) from Xenopus laevis (African clawed frog).